Reading from the N-terminus, the 878-residue chain is Bifunctional heparan sulfate N-deacetylase/N-sulfotransferase 1 (878 aa).

Residues 1-17 lie on the Cytoplasmic side of the membrane; sequence MSLSLKTRRFGRPVRPQ. The segment at 1-169 is sufficient for localization to Golgi membrane; sequence MSLSLKTRRF…VEYGVGIIGF (169 aa). Residues 18-38 form a helical; Signal-anchor for type II membrane protein membrane-spanning segment; sequence LVLLLLFALCLLSVFISAYYL. Over 39 to 878 the chain is Lumenal; it reads YGWKRGLEPS…WLREELQSTR (840 aa). Residues 40–594 are heparan sulfate N-deacetylase 1; that stretch reads GWKRGLEPSG…KRHKDIWSKE (555 aa). The segment at 47–71 is disordered; that stretch reads PSGSEAQSPDCDEPKISPSRLLPMK. 3 N-linked (GlcNAc...) asparagine glycosylation sites follow: Asn231, Asn347, and Asn397. The interval 595-878 is heparan sulfate N-sulfotransferase 1; sequence KTCDRFPKLL…WLREELQSTR (284 aa). Catalysis depends on Lys610, which acts as the For sulfotransferase activity. 610–614 lines the adenosine 3',5'-bisphosphate pocket; it reads KTGTT. A glycan (N-linked (GlcNAc...) asparagine) is linked at Asn663. Adenosine 3',5'-bisphosphate contacts are provided by Ser708 and Trp813. A disulfide bridge connects residues Cys814 and Cys824. Residue 829–833 coordinates adenosine 3',5'-bisphosphate; the sequence is KGRKY.

The protein belongs to the sulfotransferase 1 family. NDST subfamily. As to quaternary structure, monomer.

Its subcellular location is the golgi apparatus membrane. It is found in the golgi apparatus. It localises to the trans-Golgi network membrane. The catalysed reaction is alpha-D-glucosaminyl-[heparan sulfate](n) + 3'-phosphoadenylyl sulfate = N-sulfo-alpha-D-glucosaminyl-[heparan sulfate](n) + adenosine 3',5'-bisphosphate + 2 H(+). The protein operates within glycan metabolism; heparan sulfate biosynthesis. Its pathway is glycan metabolism; heparin biosynthesis. In terms of biological role, essential bifunctional enzyme that catalyzes both the N-deacetylation and the N-sulfation of glucosamine (GlcNAc) of the glycosaminoglycan in heparan sulfate. Modifies the GlcNAc-GlcA disaccharide repeating sugar backbone to make N-sulfated heparosan, a prerequisite substrate for later modifications in heparin biosynthesis. Plays a role in determining the extent and pattern of sulfation of heparan sulfate. In Xenopus tropicalis (Western clawed frog), this protein is Bifunctional heparan sulfate N-deacetylase/N-sulfotransferase 1 (ndst1).